The sequence spans 128 residues: Sulfurtransferase TusD (128 aa).

C78 functions as the Cysteine persulfide intermediate in the catalytic mechanism.

It belongs to the DsrE/TusD family. As to quaternary structure, heterohexamer, formed by a dimer of trimers. The hexameric TusBCD complex contains 2 copies each of TusB, TusC and TusD. The TusBCD complex interacts with TusE.

The protein resides in the cytoplasm. Part of a sulfur-relay system required for 2-thiolation of 5-methylaminomethyl-2-thiouridine (mnm(5)s(2)U) at tRNA wobble positions. Accepts sulfur from TusA and transfers it in turn to TusE. The protein is Sulfurtransferase TusD of Escherichia coli O7:K1 (strain IAI39 / ExPEC).